Consider the following 231-residue polypeptide: MKQYNDLFKIIHREGYIFIASFALVSFLLASFNEKLGCIGFIATIWCIYFFRNPDRFVPISDDLVISPADGIIQEIKEASPPPELGLGDLEMIRVSIFLNIFNIHVNRIPANGKILALHYNPGKFFNASLDKASLYNERQSVLMETDQGQKIVFVQIAGLIARRIVCDLEEDNEVKMGERYGIIRFGSRVDVYLPLKTALLVSKGQTAIGGETIIADFGRKKTEEFKFERK.

S188 acts as the Schiff-base intermediate with substrate; via pyruvic acid in catalysis. Residue S188 is modified to Pyruvic acid (Ser); by autocatalysis.

The protein belongs to the phosphatidylserine decarboxylase family. PSD-A subfamily. As to quaternary structure, heterodimer of a large membrane-associated beta subunit and a small pyruvoyl-containing alpha subunit. The cofactor is pyruvate. Post-translationally, is synthesized initially as an inactive proenzyme. Formation of the active enzyme involves a self-maturation process in which the active site pyruvoyl group is generated from an internal serine residue via an autocatalytic post-translational modification. Two non-identical subunits are generated from the proenzyme in this reaction, and the pyruvate is formed at the N-terminus of the alpha chain, which is derived from the carboxyl end of the proenzyme. The post-translation cleavage follows an unusual pathway, termed non-hydrolytic serinolysis, in which the side chain hydroxyl group of the serine supplies its oxygen atom to form the C-terminus of the beta chain, while the remainder of the serine residue undergoes an oxidative deamination to produce ammonia and the pyruvoyl prosthetic group on the alpha chain.

It is found in the cell membrane. It carries out the reaction a 1,2-diacyl-sn-glycero-3-phospho-L-serine + H(+) = a 1,2-diacyl-sn-glycero-3-phosphoethanolamine + CO2. It participates in phospholipid metabolism; phosphatidylethanolamine biosynthesis; phosphatidylethanolamine from CDP-diacylglycerol: step 2/2. Its function is as follows. Catalyzes the formation of phosphatidylethanolamine (PtdEtn) from phosphatidylserine (PtdSer). This chain is Phosphatidylserine decarboxylase proenzyme, found in Rickettsia prowazekii (strain Madrid E).